A 355-amino-acid chain; its full sequence is Phosphoserine aminotransferase (355 aa).

Arginine 41 is a binding site for L-glutamate. Residues 75 to 76 (AS), tryptophan 99, threonine 147, aspartate 166, and glutamine 189 each bind pyridoxal 5'-phosphate. Lysine 190 carries the N6-(pyridoxal phosphate)lysine modification. Pyridoxal 5'-phosphate is bound at residue 231-232 (NT).

This sequence belongs to the class-V pyridoxal-phosphate-dependent aminotransferase family. SerC subfamily. Homodimer. Pyridoxal 5'-phosphate is required as a cofactor.

The protein resides in the cytoplasm. The enzyme catalyses O-phospho-L-serine + 2-oxoglutarate = 3-phosphooxypyruvate + L-glutamate. The catalysed reaction is 4-(phosphooxy)-L-threonine + 2-oxoglutarate = (R)-3-hydroxy-2-oxo-4-phosphooxybutanoate + L-glutamate. The protein operates within amino-acid biosynthesis; L-serine biosynthesis; L-serine from 3-phospho-D-glycerate: step 2/3. Its pathway is cofactor biosynthesis; pyridoxine 5'-phosphate biosynthesis; pyridoxine 5'-phosphate from D-erythrose 4-phosphate: step 3/5. In terms of biological role, catalyzes the reversible conversion of 3-phosphohydroxypyruvate to phosphoserine and of 3-hydroxy-2-oxo-4-phosphonooxybutanoate to phosphohydroxythreonine. This chain is Phosphoserine aminotransferase, found in Bacteroides fragilis (strain ATCC 25285 / DSM 2151 / CCUG 4856 / JCM 11019 / LMG 10263 / NCTC 9343 / Onslow / VPI 2553 / EN-2).